The sequence spans 82 residues: Large ribosomal subunit protein bL31 (82 aa).

Belongs to the bacterial ribosomal protein bL31 family. Type A subfamily. Part of the 50S ribosomal subunit.

In terms of biological role, binds the 23S rRNA. The sequence is that of Large ribosomal subunit protein bL31 from Rippkaea orientalis (strain PCC 8801 / RF-1) (Cyanothece sp. (strain PCC 8801)).